The following is a 499-amino-acid chain: Tektin-like protein 1 (499 aa).

Residue Ser-14 is modified to Phosphoserine. Residues 201–225 are a coiled coil; sequence WEKKELKSMKRKMEKDMEISEDLLK. Residues 265-286 form a disordered region; sequence VDITRPPTPRTQGLKTPPPDPI. Positions 308–328 form a coiled coil; it reads KDILTEMAKNEVDIQNQQQEI. Tyr-372 carries the post-translational modification Phosphotyrosine.

Microtubule inner protein component of sperm flagellar doublet microtubules.

Its subcellular location is the cytoplasm. It localises to the cytoskeleton. The protein localises to the flagellum axoneme. Microtubule inner protein (MIP) part of the dynein-decorated doublet microtubules (DMTs) in sperm flagellar axoneme, which is required for motile flagellum beating. Forms an extensive interaction network cross-linking the lumen of axonemal doublet microtubules. This Mus musculus (Mouse) protein is Tektin-like protein 1.